Reading from the N-terminus, the 602-residue chain is MYIMRSSFNFLNLLVSDKMIKKIEILNNSYVEEFIEKTAELCNPSSIYLVTSEEDKEYIRRKAIETKEELPLKTLGHTIHFDHPLDQARARDDTFILTDDKIPFVNTKKREDGIREVLSLLKDSMKGREMYVGFYSLGPKNSIFQHLAIQISDSPYVIHSENILYRLDFDDFKGNKQFLKFVHSKGELDIKKRRIMIDLKEDTVYSVNTTYAGNSVGLKKLALRLTIAKAVKEGWLSEHMAIIGFEGDKGTHYFTASFPSGSGKTSTSMMGKLISDDLAFIREINGVARAVNPEIGVFGIIQGINSKDDPIIWEVLHKPNEVIFSNVLMTEDGYVYWEGSDDKRPERGINYEGFWSNDMNKPASHPNARFTVPLTAFKNLDENYDNPDGVEIEGIIFGVRDYDTLIPVVEAFSCSHGIVTIGASMESARTSAVIGKGDEYEFNPMAILDFMPIHLGEYLGNYLEFCKKLKKVPRIFGFNYFLKEGNRFLNSKEDKRVWIKWAVKRVEGSVDVIYTPIGLVPYYEDLKTLFREMLNKEYTIEDYEKQFTLKLDKYLEKNERILKLYKEILAPKEVIAELEQQKERILKYIDKYGKRISPLDLR.

Substrate contacts are provided by residues Arg89 and 211–213; that span reads YAG. The Mn(2+) site is built by Lys220 and His239. Ser260 contacts substrate. 261-266 lines the GTP pocket; sequence GSGKTS. The active site involves Ser262. Asp277 contacts Mn(2+). Residue 367-369 participates in substrate binding; the sequence is NAR. Residues Arg369 and Arg400 each coordinate GTP.

It belongs to the phosphoenolpyruvate carboxykinase [GTP] family. It depends on Mn(2+) as a cofactor.

The protein resides in the cytoplasm. The enzyme catalyses oxaloacetate + GTP = phosphoenolpyruvate + GDP + CO2. It functions in the pathway carbohydrate biosynthesis; gluconeogenesis. Its function is as follows. Catalyzes the conversion of oxaloacetate (OAA) to phosphoenolpyruvate (PEP), the rate-limiting step in the metabolic pathway that produces glucose from lactate and other precursors derived from the citric acid cycle. The sequence is that of Phosphoenolpyruvate carboxykinase [GTP] from Sulfurisphaera tokodaii (strain DSM 16993 / JCM 10545 / NBRC 100140 / 7) (Sulfolobus tokodaii).